The following is a 127-amino-acid chain: CST complex subunit TEN1 (127 aa).

This sequence belongs to the TEN1 family. In terms of assembly, component of the CST complex, composed of CTC1, TEN1 and STN1. Interacts with STN1. No interaction with POT1A, but competes with it for STN1 binding. In terms of tissue distribution, ubiquitous. High expression in meristematic tissues and in vasculature.

It is found in the nucleus. The protein localises to the chromosome. It localises to the telomere. Required for the maintenance of meristems and stem cells through the reduction of DNA damage. Promotes telomere integrity by maintaining telomere length and proper architecture of the chromosome terminus. Negatively regulates telomerase repeat addition processivity. Hampers contacts between enzymatically active telomerase and CST complex. This is CST complex subunit TEN1 from Arabidopsis thaliana (Mouse-ear cress).